Reading from the N-terminus, the 61-residue chain is Hepcidin (61 aa).

Residues 1–24 form a disordered region; sequence LQVLTEEVGSIDSPVGEHQQPGGE. The propeptide occupies 1 to 34; sequence LQVLTEEVGSIDSPVGEHQQPGGESMRLPEHFRF. Disulfide bonds link cysteine 43-cysteine 59, cysteine 46-cysteine 49, cysteine 47-residue 55, and cysteine 50-cysteine 58.

This sequence belongs to the hepcidin family.

The protein localises to the secreted. Its function is as follows. Seems to act as a signaling molecule involved in the maintenance of iron homeostasis. Seems to be required in conjunction with HFE to regulate both intestinal iron absorption and iron storage in macrophages. May also have antimicrobial activity. In Oncorhynchus mykiss (Rainbow trout), this protein is Hepcidin (hamp).